The chain runs to 473 residues: ATP synthase subunit beta (473 aa).

158–165 (GGAGVGKT) is an ATP binding site.

It belongs to the ATPase alpha/beta chains family. F-type ATPases have 2 components, CF(1) - the catalytic core - and CF(0) - the membrane proton channel. CF(1) has five subunits: alpha(3), beta(3), gamma(1), delta(1), epsilon(1). CF(0) has three main subunits: a(1), b(2) and c(9-12). The alpha and beta chains form an alternating ring which encloses part of the gamma chain. CF(1) is attached to CF(0) by a central stalk formed by the gamma and epsilon chains, while a peripheral stalk is formed by the delta and b chains.

Its subcellular location is the cell membrane. The catalysed reaction is ATP + H2O + 4 H(+)(in) = ADP + phosphate + 5 H(+)(out). Produces ATP from ADP in the presence of a proton gradient across the membrane. The catalytic sites are hosted primarily by the beta subunits. In Bacillus sp. (strain PS3), this protein is ATP synthase subunit beta.